Here is a 209-residue protein sequence, read N- to C-terminus: MSKVVETNHPLIQHKLTLMRDKNTGSKDFRELLTEIAMLMGYEITKDIPLKDVEIETPIQKTSSKVVAGKKLAIIPILRAGLGMVDGLVSLMPAAKVGHVGLYRDPETLKPVEYYCKLPQDIGERDIIVVDPMLATGGSAVAAIDLLKSKGAKSIKLANLVAAPEGIAEVQKYHDDVDIYVASVDERLNEHGYIIPGLGDAGDRLFGTK.

5-phospho-alpha-D-ribose 1-diphosphate contacts are provided by residues Arg79, Arg104, and 131–139; that span reads DPMLATGGS. Uracil contacts are provided by residues Ile194 and 199 to 201; that span reads GDA. Asp200 provides a ligand contact to 5-phospho-alpha-D-ribose 1-diphosphate.

It belongs to the UPRTase family. Requires Mg(2+) as cofactor.

The enzyme catalyses UMP + diphosphate = 5-phospho-alpha-D-ribose 1-diphosphate + uracil. The protein operates within pyrimidine metabolism; UMP biosynthesis via salvage pathway; UMP from uracil: step 1/1. With respect to regulation, allosterically activated by GTP. Its function is as follows. Catalyzes the conversion of uracil and 5-phospho-alpha-D-ribose 1-diphosphate (PRPP) to UMP and diphosphate. In Clostridioides difficile (strain 630) (Peptoclostridium difficile), this protein is Uracil phosphoribosyltransferase.